The primary structure comprises 304 residues: Elongation factor Ts (304 aa).

Residues 79 to 82 form an involved in Mg(2+) ion dislocation from EF-Tu region; sequence TDFV.

It belongs to the EF-Ts family.

It is found in the cytoplasm. Associates with the EF-Tu.GDP complex and induces the exchange of GDP to GTP. It remains bound to the aminoacyl-tRNA.EF-Tu.GTP complex up to the GTP hydrolysis stage on the ribosome. This Polaromonas sp. (strain JS666 / ATCC BAA-500) protein is Elongation factor Ts.